Reading from the N-terminus, the 326-residue chain is DNA polymerase III subunit delta' (326 aa).

DNA polymerase III contains a core (composed of alpha, epsilon and theta chains) that associates with a tau subunit. This core dimerizes to form the POLIII' complex. PolIII' associates with the gamma complex (composed of gamma, delta, delta', psi and chi chains) and with the beta chain to form the complete DNA polymerase III complex.

It catalyses the reaction DNA(n) + a 2'-deoxyribonucleoside 5'-triphosphate = DNA(n+1) + diphosphate. Functionally, DNA polymerase III is a complex, multichain enzyme responsible for most of the replicative synthesis in bacteria. This DNA polymerase also exhibits 3' to 5' exonuclease activity. The chain is DNA polymerase III subunit delta' (holB) from Buchnera aphidicola subsp. Acyrthosiphon pisum (strain APS) (Acyrthosiphon pisum symbiotic bacterium).